A 186-amino-acid polypeptide reads, in one-letter code: Putative glutathione-dependent formaldehyde-activating enzyme (186 aa).

The 147-residue stretch at 20–166 folds into the CENP-V/GFA domain; the sequence is FSGGKLRCKC…FKSIGLETYD (147 aa). 7 residues coordinate Zn(2+): Cys27, Cys29, Cys48, Cys50, Cys53, Cys95, and Cys98.

Belongs to the Gfa family. Requires Zn(2+) as cofactor.

It catalyses the reaction S-(hydroxymethyl)glutathione = glutathione + formaldehyde. The protein operates within one-carbon metabolism; formaldehyde degradation; formate from formaldehyde (glutathione route): step 1/3. Its function is as follows. Catalyzes the condensation of formaldehyde and glutathione to S-hydroxymethylglutathione. The sequence is that of Putative glutathione-dependent formaldehyde-activating enzyme from Fusarium vanettenii (strain ATCC MYA-4622 / CBS 123669 / FGSC 9596 / NRRL 45880 / 77-13-4) (Fusarium solani subsp. pisi).